An 829-amino-acid polypeptide reads, in one-letter code: MKLSRRDFMKANAVAAAAAVAGVSAPTLAANLITSTDKTAIKWDKAPCRFCGTGCSVLVGSQDGRVVATQGDPDAPVNRGLNCIKGYFLSKIMYGEDRLTQPMLRMTNGKFDKNGDFAPVSWDQAFDIMAEKFKATLKEKGPTAVGMFGSGQWTVWEGYAAAKLMKAGFRTNNLDPNARHCMASAVVGFMRTFGMDEPMGCYDDIEQADAFVLWGSNMAEMHPILWSRMSDRRLSNPDVQVHVLSTFEHRSFELADNGMVFTPQTDLAILNYVANYIIQNDKVNWEFVNKHTQFRKGTTDIGYGLRPTHPTEARAKNPGNGDATPMSFDDFAKFVADYDLESVSKLSGVSKEKLEKLAQLYADPSKKVVSYWTMGFNQHTRGVWANNLCYNIHLLTGKISTPGSGPFSLTGQPSACGTAREVGTFAHRLPADMVVTDPKHRAIAEKIWKLPEGTIPEQVGYHAVLQNRMLKDGKLNAYWVMCNNNMQAGPNMNEEALPGYRNPANFIVVSDPYPTVTAQAADLILPTAMWVEKEGAYGNAERRTQFWHQQVKPPEGAKSDLWQLMEFAKRFKVEEVWPAELIAKQPELKGKTLFDVLYANGQVDQFPKEQSKGEFNDESESFGFYVQKGLFEEYATFGRGHGHDLAPFDQYHEARGLRWPVVDGKETLWRYREGFDPYVKAGEGVRFYGKPDGRAVIFALPYEPAAEAPDKEYDMWLSTGRVLEHWHTGTMTRRVPELYRAFPDAVLFMHPEDAKARGVRRGEEVIVSSRRGEVKTRVETRGRNRPPKGLVFMPFFDASQLVNKLTLDATDPLSKETDYKKCAVKVVKA.

The segment at residues 1–30 (MKLSRRDFMKANAVAAAAAVAGVSAPTLAA) is a signal peptide (tat-type signal). The 57-residue stretch at 41-97 (IKWDKAPCRFCGTGCSVLVGSQDGRVVATQGDPDAPVNRGLNCIKGYFLSKIMYGED) folds into the 4Fe-4S Mo/W bis-MGD-type domain. 4 residues coordinate [4Fe-4S] cluster: Cys48, Cys51, Cys55, and Cys83. Mo-bis(molybdopterin guanine dinucleotide) is bound by residues Lys85, Gln152, Asn177, Cys181, 214–221 (WGSNMAEM), 245–249 (STFEH), 264–266 (QTD), Met374, Gln378, Asn484, 510–511 (SD), Lys533, Asp560, and 719–728 (TGRVLEHWHT). Position 795 (Phe795) interacts with substrate. Residues Asn803 and Lys820 each coordinate Mo-bis(molybdopterin guanine dinucleotide).

This sequence belongs to the prokaryotic molybdopterin-containing oxidoreductase family. NasA/NapA/NarB subfamily. As to quaternary structure, component of the periplasmic nitrate reductase NapAB complex composed of NapA and NapB. The cofactor is [4Fe-4S] cluster. Requires Mo-bis(molybdopterin guanine dinucleotide) as cofactor. In terms of processing, predicted to be exported by the Tat system. The position of the signal peptide cleavage has not been experimentally proven.

The protein localises to the periplasm. The enzyme catalyses 2 Fe(II)-[cytochrome] + nitrate + 2 H(+) = 2 Fe(III)-[cytochrome] + nitrite + H2O. In terms of biological role, catalytic subunit of the periplasmic nitrate reductase complex NapAB. Receives electrons from NapB and catalyzes the reduction of nitrate to nitrite. In Aeromonas salmonicida (strain A449), this protein is Periplasmic nitrate reductase.